A 254-amino-acid chain; its full sequence is 5-oxoprolinase subunit A (254 aa).

It belongs to the LamB/PxpA family. As to quaternary structure, forms a complex composed of PxpA, PxpB and PxpC.

It catalyses the reaction 5-oxo-L-proline + ATP + 2 H2O = L-glutamate + ADP + phosphate + H(+). In terms of biological role, catalyzes the cleavage of 5-oxoproline to form L-glutamate coupled to the hydrolysis of ATP to ADP and inorganic phosphate. This Acinetobacter baumannii (strain AB307-0294) protein is 5-oxoprolinase subunit A.